We begin with the raw amino-acid sequence, 356 residues long: UDP-N-acetylglucosamine--N-acetylmuramyl-(pentapeptide) pyrophosphoryl-undecaprenol N-acetylglucosamine transferase (356 aa).

Residues 12–14, Arg-166, Ser-196, and Gln-291 each bind UDP-N-acetyl-alpha-D-glucosamine; that span reads TAG.

This sequence belongs to the glycosyltransferase 28 family. MurG subfamily.

The protein localises to the cell membrane. The enzyme catalyses di-trans,octa-cis-undecaprenyl diphospho-N-acetyl-alpha-D-muramoyl-L-alanyl-D-glutamyl-meso-2,6-diaminopimeloyl-D-alanyl-D-alanine + UDP-N-acetyl-alpha-D-glucosamine = di-trans,octa-cis-undecaprenyl diphospho-[N-acetyl-alpha-D-glucosaminyl-(1-&gt;4)]-N-acetyl-alpha-D-muramoyl-L-alanyl-D-glutamyl-meso-2,6-diaminopimeloyl-D-alanyl-D-alanine + UDP + H(+). The protein operates within cell wall biogenesis; peptidoglycan biosynthesis. In terms of biological role, cell wall formation. Catalyzes the transfer of a GlcNAc subunit on undecaprenyl-pyrophosphoryl-MurNAc-pentapeptide (lipid intermediate I) to form undecaprenyl-pyrophosphoryl-MurNAc-(pentapeptide)GlcNAc (lipid intermediate II). This Geobacillus thermodenitrificans (strain NG80-2) protein is UDP-N-acetylglucosamine--N-acetylmuramyl-(pentapeptide) pyrophosphoryl-undecaprenol N-acetylglucosamine transferase.